The following is a 525-amino-acid chain: Probable protein kinase UbiB (525 aa).

The region spanning 118 to 500 is the Protein kinase domain; sequence DFERVPVASA…QKRTNRLLQG (383 aa). Residues 124–132 and Lys150 contribute to the ATP site; that span reads VASASIAQV. Catalysis depends on Asp285, which acts as the Proton acceptor. A helical transmembrane segment spans residues 501 to 521; sequence LLLFGVAVGVGAALARVFLAL.

Belongs to the ABC1 family. UbiB subfamily.

It is found in the cell inner membrane. Its pathway is cofactor biosynthesis; ubiquinone biosynthesis [regulation]. In terms of biological role, is probably a protein kinase regulator of UbiI activity which is involved in aerobic coenzyme Q (ubiquinone) biosynthesis. This Paraburkholderia xenovorans (strain LB400) protein is Probable protein kinase UbiB.